A 233-amino-acid chain; its full sequence is Mediator of RNA polymerase II transcription subunit 8 (233 aa).

The segment at 204 to 233 (RGEVDRGSSSQEGLSTNNEQSGDKDIIMAD) is disordered. Residues 210–223 (GSSSQEGLSTNNEQ) show a composition bias toward polar residues. Over residues 224-233 (SGDKDIIMAD) the composition is skewed to basic and acidic residues.

The protein belongs to the Mediator complex subunit 8 family. As to quaternary structure, component of the Mediator complex.

It localises to the nucleus. Its function is as follows. Component of the Mediator complex, a coactivator involved in the regulated transcription of nearly all RNA polymerase II-dependent genes. Mediator functions as a bridge to convey information from gene-specific regulatory proteins to the basal RNA polymerase II transcription machinery. Mediator is recruited to promoters by direct interactions with regulatory proteins and serves as a scaffold for the assembly of a functional preinitiation complex with RNA polymerase II and the general transcription factors. The chain is Mediator of RNA polymerase II transcription subunit 8 (MED8) from Candida glabrata (strain ATCC 2001 / BCRC 20586 / JCM 3761 / NBRC 0622 / NRRL Y-65 / CBS 138) (Yeast).